Consider the following 489-residue polypeptide: Adenylosuccinate synthetase 2, chloroplastic (489 aa).

The transit peptide at 1-54 directs the protein to the chloroplast; that stretch reads MPLASLSLDPAPFPLIRPAAGWSGRVLPVPGPAPRLCRPLRAAPVAPATTDEPS. Residues 76-82 and 104-106 each bind GTP; these read GDEGKGK and GHT. D77 functions as the Proton acceptor in the catalytic mechanism. Mg(2+)-binding residues include D77 and G104. Residues 77-80, 102-105, T194, R208, Q288, T303, and R367 each bind IMP; these read DEGK and NAGH. The active-site Proton donor is the H105. 363-369 contacts substrate; sequence TTTGRPR. GTP contacts are provided by residues R369, 395–397, and 478–480; these read KLD and GVG.

It belongs to the adenylosuccinate synthetase family. As to quaternary structure, homodimer. Mg(2+) is required as a cofactor.

It localises to the plastid. It is found in the chloroplast. The enzyme catalyses IMP + L-aspartate + GTP = N(6)-(1,2-dicarboxyethyl)-AMP + GDP + phosphate + 2 H(+). It functions in the pathway purine metabolism; AMP biosynthesis via de novo pathway; AMP from IMP: step 1/2. Its function is as follows. Plays an important role in the de novo pathway and in the salvage pathway of purine nucleotide biosynthesis. Catalyzes the first committed step in the biosynthesis of AMP from IMP. The chain is Adenylosuccinate synthetase 2, chloroplastic from Sorghum bicolor (Sorghum).